Reading from the N-terminus, the 281-residue chain is Protein phosphatase 2C homolog 1 (281 aa).

Positions R20–L281 constitute a PPM-type phosphatase domain. Residues D58, G59, D233, and D272 each contribute to the Mn(2+) site.

This sequence belongs to the PP2C family. Interacts with NBP2 and PBS2. Mg(2+) serves as cofactor. It depends on Mn(2+) as a cofactor.

It localises to the peroxisome. It catalyses the reaction O-phospho-L-seryl-[protein] + H2O = L-seryl-[protein] + phosphate. It carries out the reaction O-phospho-L-threonyl-[protein] + H2O = L-threonyl-[protein] + phosphate. Its function is as follows. Serine and threonine phosphatase. Involved in tRNA splicing and cell separation. The polypeptide is Protein phosphatase 2C homolog 1 (PTC1) (Saccharomyces cerevisiae (strain ATCC 204508 / S288c) (Baker's yeast)).